The following is a 392-amino-acid chain: 4-hydroxy-3-methylbut-2-en-1-yl diphosphate synthase (flavodoxin) (392 aa).

Residues Cys280, Cys283, Cys315, and Glu322 each coordinate [4Fe-4S] cluster. Residues Thr371–Glu380 are compositionally biased toward basic and acidic residues. Residues Thr371–Asn392 are disordered. A compositionally biased stretch (polar residues) spans Thr381–Asn392.

Belongs to the IspG family. It depends on [4Fe-4S] cluster as a cofactor.

The catalysed reaction is (2E)-4-hydroxy-3-methylbut-2-enyl diphosphate + oxidized [flavodoxin] + H2O + 2 H(+) = 2-C-methyl-D-erythritol 2,4-cyclic diphosphate + reduced [flavodoxin]. It participates in isoprenoid biosynthesis; isopentenyl diphosphate biosynthesis via DXP pathway; isopentenyl diphosphate from 1-deoxy-D-xylulose 5-phosphate: step 5/6. Its function is as follows. Converts 2C-methyl-D-erythritol 2,4-cyclodiphosphate (ME-2,4cPP) into 1-hydroxy-2-methyl-2-(E)-butenyl 4-diphosphate. The chain is 4-hydroxy-3-methylbut-2-en-1-yl diphosphate synthase (flavodoxin) from Mycobacterium leprae (strain Br4923).